A 401-amino-acid chain; its full sequence is Carbamoyl phosphate synthase small chain (401 aa).

Residues 1–203 form a CPSase region; the sequence is MTETAPWTTR…KGYGTLGEAD (203 aa). Positions 56, 255, and 257 each coordinate L-glutamine. The Glutamine amidotransferase type-1 domain maps to 207–395; sequence HVVCVDFGVK…VNLLRENKGE (189 aa). The active-site Nucleophile is C284. Residues L285, Q288, N326, G328, and F329 each coordinate L-glutamine. Active-site residues include H368 and E370.

This sequence belongs to the CarA family. In terms of assembly, composed of two chains; the small (or glutamine) chain promotes the hydrolysis of glutamine to ammonia, which is used by the large (or ammonia) chain to synthesize carbamoyl phosphate. Tetramer of heterodimers (alpha,beta)4.

The catalysed reaction is hydrogencarbonate + L-glutamine + 2 ATP + H2O = carbamoyl phosphate + L-glutamate + 2 ADP + phosphate + 2 H(+). It carries out the reaction L-glutamine + H2O = L-glutamate + NH4(+). It functions in the pathway amino-acid biosynthesis; L-arginine biosynthesis; carbamoyl phosphate from bicarbonate: step 1/1. Its pathway is pyrimidine metabolism; UMP biosynthesis via de novo pathway; (S)-dihydroorotate from bicarbonate: step 1/3. In terms of biological role, small subunit of the glutamine-dependent carbamoyl phosphate synthetase (CPSase). CPSase catalyzes the formation of carbamoyl phosphate from the ammonia moiety of glutamine, carbonate, and phosphate donated by ATP, constituting the first step of 2 biosynthetic pathways, one leading to arginine and/or urea and the other to pyrimidine nucleotides. The small subunit (glutamine amidotransferase) binds and cleaves glutamine to supply the large subunit with the substrate ammonia. The polypeptide is Carbamoyl phosphate synthase small chain (Agrobacterium fabrum (strain C58 / ATCC 33970) (Agrobacterium tumefaciens (strain C58))).